The sequence spans 101 residues: Urease subunit beta (101 aa).

It belongs to the urease beta subunit family. Heterotrimer of UreA (gamma), UreB (beta) and UreC (alpha) subunits. Three heterotrimers associate to form the active enzyme.

It is found in the cytoplasm. It catalyses the reaction urea + 2 H2O + H(+) = hydrogencarbonate + 2 NH4(+). Its pathway is nitrogen metabolism; urea degradation; CO(2) and NH(3) from urea (urease route): step 1/1. The protein is Urease subunit beta of Leptothrix cholodnii (strain ATCC 51168 / LMG 8142 / SP-6) (Leptothrix discophora (strain SP-6)).